A 289-amino-acid polypeptide reads, in one-letter code: Cbb3-type cytochrome c oxidase subunit FixP (289 aa).

The Cytoplasmic portion of the chain corresponds to 1-33 (MADKHKHVDEVSGVETTGHEWDGIRELNNPLPR). A helical transmembrane segment spans residues 34-56 (WWVYSFYATIIWAIGYAVAYPSW). Residues 57 to 289 (PMLTEATKGV…VFVHSLGGGE (233 aa)) lie on the Periplasmic side of the membrane. Cytochrome c domains are found at residues 110–198 (FAVS…MSLT) and 205–286 (HLVE…HSLG). Cysteine 123, cysteine 126, histidine 127, methionine 175, cysteine 218, cysteine 221, histidine 222, and methionine 263 together coordinate heme c.

The protein belongs to the CcoP / FixP family. Component of the cbb3-type cytochrome c oxidase at least composed of FixN, FixO, FixQ and FixP. Heme c serves as cofactor.

The protein resides in the cell inner membrane. It functions in the pathway energy metabolism; oxidative phosphorylation. In terms of biological role, C-type cytochrome. Part of the cbb3-type cytochrome c oxidase complex. FixP subunit is required for transferring electrons from donor cytochrome c via its heme groups to FixO subunit. From there, electrons are shuttled to the catalytic binuclear center of FixN subunit where oxygen reduction takes place. The complex also functions as a proton pump. The chain is Cbb3-type cytochrome c oxidase subunit FixP from Sinorhizobium medicae (strain WSM419) (Ensifer medicae).